Here is a 287-residue protein sequence, read N- to C-terminus: Large ribosomal subunit protein uL2 (287 aa).

Positions 221 to 287 are disordered; the sequence is RGSVMNPCDH…SKRSRGGRDS (67 aa). Residues 258–287 show a composition bias toward basic residues; it reads KTRKKNKPSNKLVVRRRRRISKRSRGGRDS.

The protein belongs to the universal ribosomal protein uL2 family. In terms of assembly, part of the 50S ribosomal subunit. Forms a bridge to the 30S subunit in the 70S ribosome.

Its function is as follows. One of the primary rRNA binding proteins. Required for association of the 30S and 50S subunits to form the 70S ribosome, for tRNA binding and peptide bond formation. It has been suggested to have peptidyltransferase activity; this is somewhat controversial. Makes several contacts with the 16S rRNA in the 70S ribosome. This is Large ribosomal subunit protein uL2 from Prochlorococcus marinus (strain MIT 9215).